The sequence spans 564 residues: Septation ring formation regulator EzrA (564 aa).

Topologically, residues 1 to 4 are extracellular; that stretch reads MVLY. A helical transmembrane segment spans residues 5–23; sequence IILAIIVIILIAVGVLFYL. Topologically, residues 24 to 564 are cytoplasmic; it reads RSNKRQIIEK…KHIEEEVIKQ (541 aa). Coiled coils occupy residues 99–138, 190–223, 271–300, 350–435, and 471–550; these read SFNA…YKDN, DGNY…LIRE, LISR…LIEH, VRQF…RRLL, and VKQL…ESVE.

Belongs to the EzrA family.

The protein localises to the cell membrane. Negative regulator of FtsZ ring formation; modulates the frequency and position of FtsZ ring formation. Inhibits FtsZ ring formation at polar sites. Interacts either with FtsZ or with one of its binding partners to promote depolymerization. The protein is Septation ring formation regulator EzrA of Staphylococcus aureus (strain JH1).